We begin with the raw amino-acid sequence, 490 residues long: Tryptophan decarboxylase (490 aa).

Lys306 carries the N6-(pyridoxal phosphate)lysine modification.

It belongs to the group II decarboxylase family. In terms of assembly, homodimer. Pyridoxal 5'-phosphate is required as a cofactor.

The protein localises to the cytoplasm. It catalyses the reaction L-tryptophan + H(+) = tryptamine + CO2. Its activity is regulated as follows. Inhibited by (S)-alpha-fluoromethyltryptophan. Functionally, catalyzes the decarboxylation of tryptophan to tryptamine. Tryptamine is a neurotransmitter that induces the release of serotonin, which is suggested to modulate gastrointestinal motility. Therefore, the tryptophan decarboxylase from the gut bacteria Ruminococcus gnavus (strain ATCC 29149 / VPI C7-9) may influence host brain and behavior. Has weak activity with tyrosine and phenylalanine. In Mediterraneibacter gnavus (strain ATCC 29149 / DSM 114966 / JCM 6515 / VPI C7-9) (Ruminococcus gnavus), this protein is Tryptophan decarboxylase.